The primary structure comprises 116 residues: uncharacterized protein (116 aa).

Belongs to the BolA/IbaG family.

It is found in the mitochondrion. This is an uncharacterized protein from Schizosaccharomyces pombe (strain 972 / ATCC 24843) (Fission yeast).